Consider the following 490-residue polypeptide: MARFEEQKLYIGGRYVEASSGATFETINPANGEVLAKVQRASREDVERAVQSAVEGQKVWAAMTAMQRSRILRRAVDILRERNDELAALETLDTGKPLAETRSVDIVTGADVLEYYAGLVPAIEGEQIPLRETSFVYTRREPLGVVAGIGAWNYPVQIALWKSAPALAAGNAMIFKPSEVTPLTALKLAEIYTEAGVPDGVFNVLTGSGREVGQWLTEHPLIEKISFTGGTSTGKKVMASASSSSLKEVTMELGGKSPLIIFPDADLDRAADIAVMANFFSSGQVCTNGTRVFIHRSQQARFEAKVLERVQRIRLGDPQDENTNFGPLVSFPHMESVLGYIESGKAQKARLLCGGERVTDGAFGKGAYVAPTVFTDCRDDMTIVREEIFGPVMSILVYDDEDEAIRRANDTEYGLAAGVVTQDLARAHRAIHRLEAGICWINTWGESPAEMPVGGYKQSGVGRENGLTTLAHYTRIKSVQVELGDYASVF.

K(+) contacts are provided by Thr-26, Ile-27, and Asp-93. 150-153 (GAWN) contacts NADPH. Residue Lys-162 is the Charge relay system of the active site. An NADPH-binding site is contributed by 176-179 (KPSE). Val-180 provides a ligand contact to K(+). NADPH-binding positions include Gly-209 and 230–233 (GTST). Leu-246 serves as a coordination point for K(+). Glu-252 acts as the Proton acceptor in catalysis. NADPH contacts are provided by Cys-286 and Glu-387. Residue Cys-286 is the Nucleophile of the active site. Cys-286 bears the Cysteine sulfenic acid (-SOH) mark. The K(+) site is built by Lys-457 and Gly-460. Glu-464 acts as the Charge relay system in catalysis.

It belongs to the aldehyde dehydrogenase family. As to quaternary structure, dimer of dimers. Requires K(+) as cofactor.

The catalysed reaction is betaine aldehyde + NAD(+) + H2O = glycine betaine + NADH + 2 H(+). It catalyses the reaction betaine aldehyde + NADP(+) + H2O = glycine betaine + NADPH + 2 H(+). It functions in the pathway amine and polyamine biosynthesis; betaine biosynthesis via choline pathway; betaine from betaine aldehyde: step 1/1. Functionally, involved in the biosynthesis of the osmoprotectant glycine betaine. Catalyzes the irreversible oxidation of betaine aldehyde to the corresponding acid. In P.aeruginosa this reaction is a compulsory step in the assimilation of carbon and nitrogen when bacteria are growing in choline or choline precursors. Can use NADP(+) with similar efficiency to NAD(+), a property that can be used by the bacterium to produce the NADPH needed to combat the oxidative stress imposed by the host defenses. This chain is NAD/NADP-dependent betaine aldehyde dehydrogenase, found in Pseudomonas aeruginosa (strain ATCC 15692 / DSM 22644 / CIP 104116 / JCM 14847 / LMG 12228 / 1C / PRS 101 / PAO1).